A 645-amino-acid polypeptide reads, in one-letter code: ATP-dependent zinc metalloprotease FtsH 3 (645 aa).

Over 1–11 the chain is Cytoplasmic; the sequence is MQNKRNQSRVL. A helical transmembrane segment spans residues 12–32; sequence WLLLIYITIGIFIYVGVNSLI. The Periplasmic segment spans residues 33 to 110; sequence GTPDVSKIEY…YVRSLENSWW (78 aa). A helical transmembrane segment spans residues 111–131; sequence ISILTFLLPVFLLIFLFTFLF. Topologically, residues 132 to 645 are cytoplasmic; that stretch reads RSSGGGANQG…ENNLIERKGI (514 aa). 202–209 provides a ligand contact to ATP; it reads GEPGTGKT. H424 provides a ligand contact to Zn(2+). E425 is a catalytic residue. Zn(2+)-binding residues include H428 and D501.

In the central section; belongs to the AAA ATPase family. This sequence in the C-terminal section; belongs to the peptidase M41 family. As to quaternary structure, homohexamer. Zn(2+) is required as a cofactor.

It localises to the cell inner membrane. In terms of biological role, acts as a processive, ATP-dependent zinc metallopeptidase for both cytoplasmic and membrane proteins. Plays a role in the quality control of integral membrane proteins. This Petrotoga mobilis (strain DSM 10674 / SJ95) protein is ATP-dependent zinc metalloprotease FtsH 3.